We begin with the raw amino-acid sequence, 544 residues long: Chromatin assembly factor 1 subunit A (544 aa).

The span at 1–22 (MNSESVDSDVAASTSNKGNELC) shows a compositional bias: polar residues. Disordered regions lie at residues 1-52 (MNSE…EADE), 67-117 (IYNG…REQE), and 138-160 (QEQQRRKEERDQKLREKEEAQRL). Low complexity predominate over residues 23 to 35 (SSSTDITSLSVSS). Residues 36–47 (PNESVIHSSHSA) are compositionally biased toward polar residues. Residues 56–170 (KLSYEGNRKK…RQEQILNKER (115 aa)) form an interaction with DNA and pcn1/PCNA region. The span at 74-117 (AGKEKKLQKQRAQEERIRQKEAERLKREKERQQREQEKKLREQE) shows a compositional bias: basic and acidic residues. Residues 76–176 (KEKKLQKQRA…NKERQQLKLN (101 aa)) adopt a coiled-coil conformation. The short motif at 172-179 (QLKLNNFF) is the PCNA-interaction protein (PIP box) element. Residues 325–396 (SNVLLNPWLE…DKDSVNASNT (72 aa)) form an interaction with histones H3/H4 region. Acidic residues predominate over residues 351–388 (DEEDDGEDLESEDEEVDNSDDIVEDGDNAFVDDEDDDK). The interval 351 to 400 (DEEDDGEDLESEDEEVDNSDDIVEDGDNAFVDDEDDDKDSVNASNTHRSS) is disordered.

Belongs to the RLF2 family. Component of chromatin assembly factor 1 (CAF-1), composed of pcf1, pcf2 and pcf3. Interacts (via PIP motif) with pcn1/PCNA; the interaction is direct and occurs during S-phase. Interacts with swi6 at the G1/S-phase transition and early S-phase, but not in the G2 phase. The CAF-1 complex interacts with histone H3/H4 dimers.

It localises to the nucleus. Its function is as follows. Acts as a component of the histone chaperone complex chromatin assembly factor 1 (CAF-1), which assembles histone octamers onto DNA during replication and repair. CAF-1 performs the first step of the nucleosome assembly process, bringing newly synthesized histones H3 and H4 to replicating DNA; histones H2A/H2B can bind to this chromatin precursor subsequent to DNA replication to complete the histone octamer. Plays a role in the maintenance of heterochromatin. This Schizosaccharomyces pombe (strain 972 / ATCC 24843) (Fission yeast) protein is Chromatin assembly factor 1 subunit A.